The following is a 359-amino-acid chain: tRNA N6-adenosine threonylcarbamoyltransferase (359 aa).

Fe cation contacts are provided by H115 and H119. Substrate contacts are provided by residues 137–141 (LVSGG), D170, G183, and N283. D311 serves as a coordination point for Fe cation. The disordered stretch occupies residues 328–359 (APDSLDIAPRSRWPLDEKSAPVFGTGRRGAKA).

The protein belongs to the KAE1 / TsaD family. Fe(2+) serves as cofactor.

It is found in the cytoplasm. The catalysed reaction is L-threonylcarbamoyladenylate + adenosine(37) in tRNA = N(6)-L-threonylcarbamoyladenosine(37) in tRNA + AMP + H(+). Functionally, required for the formation of a threonylcarbamoyl group on adenosine at position 37 (t(6)A37) in tRNAs that read codons beginning with adenine. Is involved in the transfer of the threonylcarbamoyl moiety of threonylcarbamoyl-AMP (TC-AMP) to the N6 group of A37, together with TsaE and TsaB. TsaD likely plays a direct catalytic role in this reaction. The chain is tRNA N6-adenosine threonylcarbamoyltransferase from Brucella melitensis biotype 2 (strain ATCC 23457).